The sequence spans 1142 residues: Coiled-coil domain-containing protein 40 (1142 aa).

2 disordered regions span residues 1–197 (MAEP…QVLP) and 251–274 (PSTE…AEDE). Composition is skewed to basic and acidic residues over residues 11–27 (SHPE…EGNN) and 35–55 (PEKD…HPEE). Acidic residues predominate over residues 63–96 (AIEEGEVETEGEAAVEGEEEAVSYGDAESEEEYY). Position 252 is a phosphoserine (Ser-252). The segment covering 265-274 (EGSDEEAEDE) has biased composition (acidic residues). Coiled-coil stretches lie at residues 293-319 (AALK…ATKQ), 349-470 (HDRH…QAED), 526-627 (QAKS…LRRK), 684-950 (TSSR…LGQL), and 1005-1054 (VRKA…LTRL).

The protein belongs to the CCDC40 family.

It is found in the cytoplasm. Its subcellular location is the cell projection. The protein localises to the cilium. Required for assembly of dynein regulatory complex (DRC) and inner dynein arm (IDA) complexes, which are responsible for ciliary beat regulation, thereby playing a central role in motility in cilia and flagella. Probably acts together with CCDC39 to form a molecular ruler that determines the 96 nanometer (nm) repeat length and arrangements of components in cilia and flagella. Not required for outer dynein arm complexes assembly. Required for axonemal recruitment of CCDC39. The chain is Coiled-coil domain-containing protein 40 from Homo sapiens (Human).